Reading from the N-terminus, the 744-residue chain is Cytosolic neutral trehalase (744 aa).

Residues Asp99, Asp101, Asn103, Gln105, and Asp110 each contribute to the Ca(2+) site. Residues Arg286, 293-294 (WD), Asn330, 339-341 (RSQ), Glu406, Arg455, and Gly458 each bind substrate. Active-site proton donor/acceptor residues include Asp460 and Glu665.

It belongs to the glycosyl hydrolase 37 family. Ca(2+) serves as cofactor.

It localises to the cytoplasm. The enzyme catalyses alpha,alpha-trehalose + H2O = alpha-D-glucose + beta-D-glucose. It participates in carbohydrate degradation. Functionally, hydrolyzes intracellular trehalose to glucose. This Neurospora crassa (strain ATCC 24698 / 74-OR23-1A / CBS 708.71 / DSM 1257 / FGSC 987) protein is Cytosolic neutral trehalase.